The chain runs to 299 residues: Nitrogenase iron protein (299 aa).

11 to 18 (GKGGIGKS) contacts ATP. Cys-99 lines the [4Fe-4S] cluster pocket. Arg-102 carries the ADP-ribosylarginine; by dinitrogenase reductase ADP-ribosyltransferase modification. Cys-133 provides a ligand contact to [4Fe-4S] cluster.

Belongs to the NifH/BchL/ChlL family. Homodimer. Requires [4Fe-4S] cluster as cofactor. The reversible ADP-ribosylation of Arg-102 inactivates the nitrogenase reductase and regulates nitrogenase activity.

The catalysed reaction is N2 + 8 reduced [2Fe-2S]-[ferredoxin] + 16 ATP + 16 H2O = H2 + 8 oxidized [2Fe-2S]-[ferredoxin] + 2 NH4(+) + 16 ADP + 16 phosphate + 6 H(+). The key enzymatic reactions in nitrogen fixation are catalyzed by the nitrogenase complex, which has 2 components: the iron protein and the molybdenum-iron protein. The chain is Nitrogenase iron protein from Rhodopseudomonas palustris (strain BisB5).